The chain runs to 307 residues: Nicotinamide/nicotinic acid mononucleotide adenylyltransferase 2 (307 aa).

Positions 16 and 17 each coordinate NAD(+). Position 24 (H24) interacts with ATP. Residues W92 and T95 each coordinate NAD(+). S-palmitoyl cysteine attachment occurs at residues C164 and C165. Residues G200, D202, L212, W213, and R232 each coordinate NAD(+). 271-274 (TKSR) contributes to the ATP binding site.

Belongs to the eukaryotic NMN adenylyltransferase family. As to quaternary structure, monomer. Mg(2+) is required as a cofactor. In terms of processing, degraded in response to injured neurite. Degradation is caused by polyubiquitination by MYCBP2 after recognition by FBXO45. Palmitoylated; palmitoylation is required for membrane association. In terms of tissue distribution, expressed predominantly in the brain and nervous system.

Its subcellular location is the golgi apparatus membrane. It localises to the cytoplasmic vesicle membrane. The protein localises to the cytoplasm. It is found in the cell projection. The protein resides in the axon. It carries out the reaction beta-nicotinamide D-ribonucleotide + ATP + H(+) = diphosphate + NAD(+). The enzyme catalyses nicotinate beta-D-ribonucleotide + ATP + H(+) = deamido-NAD(+) + diphosphate. It participates in cofactor biosynthesis; NAD(+) biosynthesis; NAD(+) from nicotinamide D-ribonucleotide: step 1/1. It functions in the pathway cofactor biosynthesis; NAD(+) biosynthesis; deamido-NAD(+) from nicotinate D-ribonucleotide: step 1/1. With respect to regulation, inhibited by P1-(adenosine-5')-P3-(nicotinamide-riboside-5')-triphosphate (Np3AD) and P1-(adenosine-5')-P4-(nicotinamide-riboside-5')-tetraphosphate (Np4AD). Functionally, nicotinamide/nicotinate-nucleotide adenylyltransferase that acts as an axon maintenance factor. Axon survival factor required for the maintenance of healthy axons: acts by delaying Wallerian axon degeneration, an evolutionarily conserved process that drives the loss of damaged axons. Catalyzes the formation of NAD(+) from nicotinamide mononucleotide (NMN) and ATP. Can also use the deamidated form; nicotinic acid mononucleotide (NaMN) as substrate but with a lower efficiency. Cannot use triazofurin monophosphate (TrMP) as substrate. Also catalyzes the reverse reaction, i.e. the pyrophosphorolytic cleavage of NAD(+). For the pyrophosphorolytic activity prefers NAD(+), NADH and NaAD as substrates and degrades nicotinic acid adenine dinucleotide phosphate (NHD) less effectively. Fails to cleave phosphorylated dinucleotides NADP(+), NADPH and NaADP(+). Also acts as an activator of ADP-ribosylation by supporting the catalytic activity of PARP16 and promoting mono-ADP-ribosylation of ribosomes by PARP16. May be involved in the maintenance of axonal integrity. The polypeptide is Nicotinamide/nicotinic acid mononucleotide adenylyltransferase 2 (Mus musculus (Mouse)).